Consider the following 408-residue polypeptide: Guanine nucleotide-binding protein alpha-14 subunit (408 aa).

Residues 38–45 (HSEELEAK), 78–85 (GGPSSGKS), 201–205 (NRISK), 216–222 (VHSRKAT), 241–245 (DVGGQ), 285–288 (FPNF), 325–328 (NKVD), and alanine 380 contribute to the GTP site. A G-alpha domain is found at 70 to 408 (SHIKILILGG…KANSKATGLS (339 aa)). The G1 motif stretch occupies residues 73–86 (KILILGGPSSGKST). Mg(2+) is bound at residue serine 85. The tract at residues 214 to 222 (DIVHSRKAT) is G2 motif. Residue threonine 222 participates in Mg(2+) binding. Positions 237–246 (LLMVDVGGQR) are G3 motif. The G4 motif stretch occupies residues 321–328 (LLFFNKVD). The interval 378–383 (TTATNT) is G5 motif.

Belongs to the G-alpha family. In terms of assembly, g proteins are composed of 3 units; alpha, beta and gamma. The alpha chain contains the guanine nucleotide binding site.

Guanine nucleotide-binding proteins (G proteins) are involved as modulators or transducers in various transmembrane signaling systems. In Caenorhabditis briggsae, this protein is Guanine nucleotide-binding protein alpha-14 subunit (gpa-14).